The chain runs to 149 residues: Hut operon positive regulatory protein (149 aa).

The protein belongs to the HutP family. As to quaternary structure, homohexamer.

Functionally, antiterminator that binds to cis-acting regulatory sequences on the mRNA in the presence of histidine, thereby suppressing transcription termination and activating the hut operon for histidine utilization. This is Hut operon positive regulatory protein from Geobacillus thermodenitrificans (strain NG80-2).